Reading from the N-terminus, the 658-residue chain is Protein teflon (658 aa).

The segment at 33–56 adopts a C2H2-type 1 zinc-finger fold; sequence LYCHFCRDLFTQLPEFLRHLQSNH. Residues 80-131 are disordered; it reads DKAHEDAQSAGHNSSSGDSRSLMNSEDSRAIDGSEENSDNSPVKPEQIGKQN. The span at 89–104 shows a compositional bias: polar residues; it reads AGHNSSSGDSRSLMNS. 2 C2H2-type zinc fingers span residues 608–630 and 634–657; these read YFCKWCDDIFILKKEYLKHLISH and FQCTKCIKVFKYKGYYEKHLRNAH.

It belongs to the Teflon family.

Its subcellular location is the nucleus. It is found in the chromosome. Its function is as follows. Specifically required in males for proper segregation of autosomal bivalents at meiosis I. Expression is required in the male germ line prior to spermatocyte stage S4. May have a role as a bridging molecule maintaining adhesion to hold autosome bivalents together via heterochromatic connections. The polypeptide is Protein teflon (Drosophila simulans (Fruit fly)).